Here is a 130-residue protein sequence, read N- to C-terminus: MARPARRTVRRSERKNVEKGIAHIHSTFNNTIVTITDPSGNAIAWASAGTCGFSGTKKGTPFAAQLAAEKAAKMAMDHGMRTVEVYVKGPGAGREAAIRALQAAGLEVTLIKDVTPIPHNGCRPPKRRRV.

The protein belongs to the universal ribosomal protein uS11 family. Part of the 30S ribosomal subunit. Interacts with proteins S7 and S18. Binds to IF-3.

Functionally, located on the platform of the 30S subunit, it bridges several disparate RNA helices of the 16S rRNA. Forms part of the Shine-Dalgarno cleft in the 70S ribosome. In Caldicellulosiruptor bescii (strain ATCC BAA-1888 / DSM 6725 / KCTC 15123 / Z-1320) (Anaerocellum thermophilum), this protein is Small ribosomal subunit protein uS11.